We begin with the raw amino-acid sequence, 273 residues long: Programmed cell death 1 ligand 2 (273 aa).

An N-terminal signal peptide occupies residues 1–19; the sequence is MIFLLLMLSLELQLHQIAA. The Extracellular portion of the chain corresponds to 20–220; it reads LFTVTVPKEL…SQMEPRTHPT (201 aa). Residues 21-118 form the Ig-like V-type domain; that stretch reads FTVTVPKELY…AWDYKYLTLK (98 aa). Residues asparagine 37, asparagine 64, asparagine 157, asparagine 163, and asparagine 189 are each glycosylated (N-linked (GlcNAc...) asparagine). 2 disulfides stabilise this stretch: cysteine 42-cysteine 102 and cysteine 143-cysteine 192. The Ig-like C2-type domain occupies 122–203; sequence SYRKINTHIL…FWNTHVRELT (82 aa). A helical transmembrane segment spans residues 221-241; sequence WLLHIFIPFCIIAFIFIATVI. The Cytoplasmic segment spans residues 242–273; that stretch reads ALRKQLCQKLYSSKDTTKRPVTTTKREVNSAI.

Belongs to the immunoglobulin superfamily. BTN/MOG family. In terms of assembly, interacts with PDCD1. Highly expressed in heart, placenta, pancreas, lung and liver and weakly expressed in spleen, lymph nodes and thymus.

It localises to the secreted. The protein localises to the endomembrane system. The protein resides in the cell membrane. Involved in the costimulatory signal, essential for T-cell proliferation and IFNG production in a PDCD1-independent manner. Interaction with PDCD1 inhibits T-cell proliferation by blocking cell cycle progression and cytokine production. The chain is Programmed cell death 1 ligand 2 (PDCD1LG2) from Homo sapiens (Human).